Consider the following 217-residue polypeptide: UPF0502 protein swp_3027 (217 aa).

Belongs to the UPF0502 family.

In Shewanella piezotolerans (strain WP3 / JCM 13877), this protein is UPF0502 protein swp_3027.